The primary structure comprises 180 residues: Cytochrome b6-f complex iron-sulfur subunit 2 (180 aa).

The helical transmembrane segment at 21–43 (LLTFGTITGVAAGALYPAVKYLI) threads the bilayer. The Rieske domain maps to 66–162 (VTEFLASHNA…ATVTDDDKLV (97 aa)). Cys-108, His-110, Cys-126, and His-129 together coordinate [2Fe-2S] cluster. A disulfide bridge links Cys-113 with Cys-128.

The protein belongs to the Rieske iron-sulfur protein family. As to quaternary structure, the 4 large subunits of the cytochrome b6-f complex are cytochrome b6, subunit IV (17 kDa polypeptide, PetD), cytochrome f and the Rieske protein, while the 4 small subunits are PetG, PetL, PetM and PetN. The complex functions as a dimer. Requires [2Fe-2S] cluster as cofactor.

It localises to the cellular thylakoid membrane. The enzyme catalyses 2 oxidized [plastocyanin] + a plastoquinol + 2 H(+)(in) = 2 reduced [plastocyanin] + a plastoquinone + 4 H(+)(out). Component of the cytochrome b6-f complex, which mediates electron transfer between photosystem II (PSII) and photosystem I (PSI), cyclic electron flow around PSI, and state transitions. The protein is Cytochrome b6-f complex iron-sulfur subunit 2 of Synechocystis sp. (strain ATCC 27184 / PCC 6803 / Kazusa).